Here is a 156-residue protein sequence, read N- to C-terminus: Small ribosomal subunit protein uS7 (156 aa).

Belongs to the universal ribosomal protein uS7 family. Part of the 30S ribosomal subunit. Contacts proteins S9 and S11.

Functionally, one of the primary rRNA binding proteins, it binds directly to 16S rRNA where it nucleates assembly of the head domain of the 30S subunit. Is located at the subunit interface close to the decoding center, probably blocks exit of the E-site tRNA. The protein is Small ribosomal subunit protein uS7 of Clostridium acetobutylicum (strain ATCC 824 / DSM 792 / JCM 1419 / IAM 19013 / LMG 5710 / NBRC 13948 / NRRL B-527 / VKM B-1787 / 2291 / W).